The sequence spans 149 residues: MHCPFCSATDTKVIDSRLVADGHQVRRRRECTLCHERFTTFEGAELVMPRVIKRDDTRQPFDEDKLRGGMLRAVEKRPVSMDQLEQALTKIKSTLRATGEREINSEMIGNLMMEQLMHLDKVAYIRFASVYRAFEDVSQFGEAIAKLEK.

A zinc finger spans residues 3–34 (CPFCSATDTKVIDSRLVADGHQVRRRRECTLC). The ATP-cone domain occupies 49 to 139 (PRVIKRDDTR…VYRAFEDVSQ (91 aa)).

This sequence belongs to the NrdR family. Requires Zn(2+) as cofactor.

Functionally, negatively regulates transcription of bacterial ribonucleotide reductase nrd genes and operons by binding to NrdR-boxes. The chain is Transcriptional repressor NrdR from Shewanella denitrificans (strain OS217 / ATCC BAA-1090 / DSM 15013).